The sequence spans 109 residues: Cell division protein ZapA (109 aa).

Residues P21–Q97 adopt a coiled-coil conformation.

It belongs to the ZapA family. Type 1 subfamily. As to quaternary structure, homodimer. Interacts with FtsZ.

The protein resides in the cytoplasm. Functionally, activator of cell division through the inhibition of FtsZ GTPase activity, therefore promoting FtsZ assembly into bundles of protofilaments necessary for the formation of the division Z ring. It is recruited early at mid-cell but it is not essential for cell division. In Enterobacter sp. (strain 638), this protein is Cell division protein ZapA.